The sequence spans 146 residues: Small RNA-binding protein 11, chloroplastic (146 aa).

The transit peptide at 1–31 (MAALARIGGRHLKSVCLINSSASCFFTQRRG) directs the protein to the chloroplast. The 79-residue stretch at 34 to 112 (SKLFIGGLSF…RTIFVDYAKA (79 aa)) folds into the RRM domain. Serine 42 bears the Phosphoserine mark.

As to expression, expressed in rosette leaves, cauline leaves, stems and flowers.

The protein localises to the plastid. The protein resides in the chloroplast. Probable RNA-binding protein that may be involved in salt and oxidative stress tolerance. This Arabidopsis thaliana (Mouse-ear cress) protein is Small RNA-binding protein 11, chloroplastic.